The following is a 62-amino-acid chain: Large ribosomal subunit protein bL28 (62 aa).

Belongs to the bacterial ribosomal protein bL28 family.

This is Large ribosomal subunit protein bL28 from Carboxydothermus hydrogenoformans (strain ATCC BAA-161 / DSM 6008 / Z-2901).